The sequence spans 469 residues: Diaminobutyrate--2-oxoglutarate transaminase (469 aa).

N6-(pyridoxal phosphate)lysine is present on Lys290.

This sequence belongs to the class-III pyridoxal-phosphate-dependent aminotransferase family. Pyridoxal 5'-phosphate serves as cofactor.

It localises to the cytoplasm. The enzyme catalyses L-2,4-diaminobutanoate + 2-oxoglutarate = L-aspartate 4-semialdehyde + L-glutamate. Its function is as follows. Involved in the degradation of ectoine, which allows H.elongata to utilize ectoine as both a carbon and a nitrogen source for growth. Probably catalyzes the conversion of L-2,4-diaminobutyrate (DABA) to L-aspartate beta-semialdehyde (ASA) by transamination with 2-oxoglutarate. This Halomonas elongata (strain ATCC 33173 / DSM 2581 / NBRC 15536 / NCIMB 2198 / 1H9) protein is Diaminobutyrate--2-oxoglutarate transaminase.